A 176-amino-acid polypeptide reads, in one-letter code: Large ribosomal subunit protein uL22 (176 aa).

Positions 113-176 (VVESRPSKDQ…EISEAKGGSD (64 aa)) are disordered. Positions 136-152 (SKAAATAPAKKSSASKA) are enriched in low complexity. The span at 159–176 (TKAESKTSEISEAKGGSD) shows a compositional bias: basic and acidic residues.

Belongs to the universal ribosomal protein uL22 family. In terms of assembly, part of the 50S ribosomal subunit.

Functionally, this protein binds specifically to 23S rRNA; its binding is stimulated by other ribosomal proteins, e.g. L4, L17, and L20. It is important during the early stages of 50S assembly. It makes multiple contacts with different domains of the 23S rRNA in the assembled 50S subunit and ribosome. The globular domain of the protein is located near the polypeptide exit tunnel on the outside of the subunit, while an extended beta-hairpin is found that lines the wall of the exit tunnel in the center of the 70S ribosome. The chain is Large ribosomal subunit protein uL22 from Mycobacterium ulcerans (strain Agy99).